Here is a 414-residue protein sequence, read N- to C-terminus: Phospholipid-transporting ATPase accessory subunit LEM3 (414 aa).

The tract at residues M1 to N50 is required for localization to the plasma membrane. Topologically, residues M1–T74 are cytoplasmic. Residues A20–R52 are disordered. The span at N26 to E42 shows a compositional bias: acidic residues. The residue at position 36 (S36) is a Phosphoserine. Residues V75–A95 traverse the membrane as a helical segment. Topologically, residues Q96–P372 are extracellular. 2 disulfides stabilise this stretch: C110–C159 and C216–C231. The N-linked (GlcNAc...) asparagine glycan is linked to N113. N240, N256, N279, N298, and N332 each carry an N-linked (GlcNAc...) asparagine glycan. Residues F373–L393 form a helical membrane-spanning segment. Residues T394 to K414 lie on the Cytoplasmic side of the membrane. The tract at residues G400 to K414 is required for localization to the plasma membrane.

Belongs to the CDC50/LEM3 family. As to quaternary structure, component of a flippase complex consisting of DNF1 or DNF2 and LEM3. Interacts with DNF1; the interaction is direct and required for their mutual export from the endoplasmic reticulum. Interacts with DNF2; the interaction is direct and required for their mutual export from the endoplasmic reticulum.

The protein localises to the cell membrane. Accessory component of a P4-ATPase flippase complex which catalyzes the hydrolysis of ATP coupled to the transport of glucosylceramide, phosphatidylcholine, phosphatidylethanolamine, and small amounts of phosphatidylserine from the lumenal to the cytosolic leaflet of the cell membrane and ensures the maintenance of asymmetric distribution of phospholipids. Contributes to substrate binding and specificity of the P4-ATPase catalytic subunit. This chain is Phospholipid-transporting ATPase accessory subunit LEM3, found in Saccharomyces cerevisiae (strain ATCC 204508 / S288c) (Baker's yeast).